Consider the following 252-residue polypeptide: MKNEIAAVVFFFTRLVRKHDKLKKEAVERFAEKLTQILQEKYKNHWYPEKPSKGQAYRCIRVNKFQRVDPDVLKACENSCILYSDLGLPKELTLWVDPCEVCCRYGEKNNAFIVASFENEDENKDEISKKVSRALDKVTSDYHSGSSSSDEDTSKEVDVKPSSVAATPSPVYQISELIFPPLPMWHPLPRKKPGMYRGSGHQTHYPPPVPFAYPNPGRKNKPFRPIPVTWVPPPGMHCDRNHWINPHMLAPH.

The disordered stretch occupies residues 138 to 163 (VTSDYHSGSSSSDEDTSKEVDVKPSS).

This sequence belongs to the BTG family. Ubiquitous.

Its function is as follows. Overexpression impairs serum-induced cell cycle progression from the G0/G1 to S phase. The polypeptide is Protein BTG3 (Btg3) (Mus musculus (Mouse)).